Consider the following 4138-residue polypeptide: Fumosorinone synthetase (4138 aa).

The Ketosynthase family 3 (KS3) domain maps to 15 to 455; sequence PEPIAIVGSA…GTNAHAIIER (441 aa). Active-site for beta-ketoacyl synthase activity residues include C189, H328, and H375. Positions 590-921 are malonyl-CoA:ACP transacylase (MAT) domain; that stretch reads VFTGQGAQWP…APDAVSFSTA (332 aa). Residues 990 to 1133 form an N-terminal hotdog fold region; sequence HELLGRRAVD…GLIDVHLGPR (144 aa). Positions 990-1306 are dehydratase (DH) domain; that stretch reads HELLGRRAVD…GFEVRSVGER (317 aa). The region spanning 990–1309 is the PKS/mFAS DH domain; the sequence is HELLGRRAVD…VRSVGERDAA (320 aa). The active-site Proton acceptor; for dehydratase activity is the H1022. Positions 1157–1309 are C-terminal hotdog fold; it reads LQEIDCEKLY…VRSVGERDAA (153 aa). The active-site Proton donor; for dehydratase activity is D1216. Residues 1456–1650 are methyltransferase (MT) domain; it reads RFYAEDKGMQ…FSGADHVAHD (195 aa). Residues 2205–2379 are ketoreductase (KR) domain; sequence TYLMVGAAGG…AASIIHVGFV (175 aa). One can recognise a Carrier 1 domain in the interval 2507 to 2587; that stretch reads EAAAAVRRAF…QLSTLAAKLA (81 aa). S2547 bears the O-(pantetheine 4'-phosphoryl)serine mark. The disordered stretch occupies residues 2587-2683; that stretch reads ARQQSPRKEG…TEPKTEDKVS (97 aa). Positions 2610-2621 are enriched in basic and acidic residues; it reads TQDKLVDDKEQK. The span at 2622–2643 shows a compositional bias: polar residues; sequence VQVTSSLAKADSLTQEMQASAH. The span at 2647-2659 shows a compositional bias: low complexity; that stretch reads DSATNPTPSSTAS. Residues 2664–2675 show a composition bias toward polar residues; sequence SNSQSTRSTSTE. The segment at 2701 to 3128 is condensation (C) domain; that stretch reads REAPMSAAQA…ASQRVRECAV (428 aa). The segment at 3162–3564 is adenylation (A) (KR) domain; that stretch reads CQKNSARTAI…DGTLLCFGRI (403 aa). Residues 3680-3759 enclose the Carrier 2 domain; the sequence is EKMTIQEGEL…GMTRCVLAQR (80 aa). The residue at position 3719 (S3719) is an O-(pantetheine 4'-phosphoryl)serine. Residues 3813 to 4045 form a reductase (RED) domain region; the sequence is LTGATGFLGG…LDFGTVDAVV (233 aa).

This sequence in the C-terminal section; belongs to the NRP synthetase family.

Functionally, hybrid PKS-NRPS synthetase; part of the gene cluster that mediates the biosynthesis of fumosorinone, a 2-pyridone alkaloid that acts as an inhibitor of protein tyrosine phosphatase 1B which is implicated asa negative regulator of insulin receptor signaling and a potential drug target for the treatment of type II diabetes and other associated metabolic syndromes. The polyketide-amino acid backbone of fumosorinone is first assembled by the PKS-NRPS hybrid fumoS. The PKS modules condense one acetyl-CoA starter unit with 7 malonyl-CoA units, programmed C-methylations occurring after the first 3 and the sixth extensions, and cycles of full reduction occurring after the first 2 extensions. Because fumoS lacks a designated enoyl reductase (ER) domain, the required activity is provided the enoyl reductase fumoC. Upon formation of the polyketide backbone on the thiotemplate, the polyketide is transferred to the NRPS module and linked to tyrosine to produce the acyltetramic acid intermediate called prefumosorinone A. The cytochrome P450 monooxygenase fumoA then probably catalyzes an unprecedented oxidative ring expansion of prefumosorinone A to form prefumosorinone B which contains the 2-pyridone core of fumosorinone. The cytochrome P450 monooxygenase fumoB might hydroxylate the nitrogen of prefumosorinone B, but not the acyltetramic acid prefumosorinone A, to form fumosorinone. The polypeptide is Fumosorinone synthetase (Cordyceps fumosorosea (strain ARSEF 2679) (Isaria fumosorosea)).